The following is a 48-amino-acid chain: Large ribosomal subunit protein bL32 (48 aa).

The segment covering 1–20 (MAVPKRRVSKTRAAKRRTHY) has biased composition (basic residues). Residues 1 to 48 (MAVPKRRVSKTRAAKRRTHYKVSLPMPVKDKDGSYKMPHRANPTTKEY) are disordered.

Belongs to the bacterial ribosomal protein bL32 family.

This is Large ribosomal subunit protein bL32 from Campylobacter jejuni subsp. doylei (strain ATCC BAA-1458 / RM4099 / 269.97).